We begin with the raw amino-acid sequence, 403 residues long: MSQCTVEYNVSEITEYVLSTLGERCQSAGIVIPTVIIYGTIFLLGLFGNICTCIVIAANKSMHNPTNYYLFSLAVSDIIALILGLPMEFYQSLDYSYPYRFSEGICKARAFLIEFTSYASIMIICCFSFERWLAICHPLRSKIFSTLWRANVLIILAWTISFVCALPIAFIVQINKLPLPEDAKYQPWTNKVSTDGIFVLHTEFCAMNQSRPDQQKMIIIFAFTVFFVIPAIAIVIMYAHIAVQLESSEIDLKGDKMVKKRRNKSNRTVLKMLLSVVITFFICWLPFHIQRLLSVYTTWSETTTISPPVQFLSMIVFYISGFCYYSNSAANPILYNILSQKYRSAFCRTILGDHIANFVFKGHQRPGQSKRCSSSTEAEQRTLMTRGSVRVDKPHRKLEVHNY.

The Extracellular portion of the chain corresponds to 1–27; sequence MSQCTVEYNVSEITEYVLSTLGERCQS. A helical transmembrane segment spans residues 28 to 48; it reads AGIVIPTVIIYGTIFLLGLFG. Topologically, residues 49–68 are cytoplasmic; it reads NICTCIVIAANKSMHNPTNY. Residues 69–89 traverse the membrane as a helical segment; sequence YLFSLAVSDIIALILGLPMEF. Topologically, residues 90-109 are extracellular; that stretch reads YQSLDYSYPYRFSEGICKAR. A helical transmembrane segment spans residues 110 to 130; that stretch reads AFLIEFTSYASIMIICCFSFE. Topologically, residues 131 to 151 are cytoplasmic; the sequence is RWLAICHPLRSKIFSTLWRAN. The chain crosses the membrane as a helical span at residues 152-172; it reads VLIILAWTISFVCALPIAFIV. Residues 173 to 216 are Extracellular-facing; it reads QINKLPLPEDAKYQPWTNKVSTDGIFVLHTEFCAMNQSRPDQQK. Residues 217–237 form a helical membrane-spanning segment; sequence MIIIFAFTVFFVIPAIAIVIM. Over 238-268 the chain is Cytoplasmic; sequence YAHIAVQLESSEIDLKGDKMVKKRRNKSNRT. A helical membrane pass occupies residues 269-289; sequence VLKMLLSVVITFFICWLPFHI. Residues 290–304 are Extracellular-facing; sequence QRLLSVYTTWSETTT. The helical transmembrane segment at 305 to 325 threads the bilayer; that stretch reads ISPPVQFLSMIVFYISGFCYY. Residues 326 to 403 are Cytoplasmic-facing; sequence SNSAANPILY…PHRKLEVHNY (78 aa).

It belongs to the G-protein coupled receptor 1 family.

The protein localises to the membrane. Putative G protein-coupled receptor for pyrokinin-like neuropeptide derived from the processing of the neuropeptide precursor capa-1. The sequence is that of Neuromedin U receptor homolog nmur-2 from Caenorhabditis elegans.